The primary structure comprises 337 residues: Ferredoxin--NADP reductase (337 aa).

FAD is bound by residues Asp33, Gln41, Tyr46, Ala86, Phe120, Asp286, and Thr327.

This sequence belongs to the ferredoxin--NADP reductase type 2 family. As to quaternary structure, homodimer. It depends on FAD as a cofactor.

The catalysed reaction is 2 reduced [2Fe-2S]-[ferredoxin] + NADP(+) + H(+) = 2 oxidized [2Fe-2S]-[ferredoxin] + NADPH. This is Ferredoxin--NADP reductase from Rickettsia canadensis (strain McKiel).